The sequence spans 1066 residues: Ubiquitin conjugation factor E4 A (1066 aa).

Residues 35–57 are disordered; sequence QLKQQSDELPASPDDSDNSVSES. Lys386 is modified (N6-acetyllysine). The U-box domain occupies 987-1061; the sequence is DACDEFLDPI…QRWLAERKQQ (75 aa).

The protein belongs to the ubiquitin conjugation factor E4 family.

It localises to the cytoplasm. It catalyses the reaction S-ubiquitinyl-[E2 ubiquitin-conjugating enzyme]-L-cysteine + [acceptor protein]-L-lysine = [E2 ubiquitin-conjugating enzyme]-L-cysteine + N(6)-ubiquitinyl-[acceptor protein]-L-lysine.. Its pathway is protein modification; protein ubiquitination. In terms of biological role, ubiquitin-protein ligase that probably functions as an E3 ligase in conjunction with specific E1 and E2 ligases. May also function as an E4 ligase mediating the assembly of polyubiquitin chains on substrates ubiquitinated by another E3 ubiquitin ligase. Mediates 'Lys-48'-linked polyubiquitination of substrates. The protein is Ubiquitin conjugation factor E4 A of Rattus norvegicus (Rat).